We begin with the raw amino-acid sequence, 221 residues long: Beta-phosphoglucomutase (221 aa).

The active-site Nucleophile is Asp-8. Positions 8 and 10 each coordinate Mg(2+). Residue Asp-8 is modified to 4-aspartylphosphate. The Proton donor/acceptor role is filled by Asp-10. Residues Asp-10, Gly-46, Val-47, Arg-49, Ser-116, Lys-117, and Asn-118 each contribute to the beta-D-glucose 6-phosphate site. Asp-170 contacts Mg(2+).

This sequence belongs to the HAD-like hydrolase superfamily. CbbY/CbbZ/Gph/YieH family. Monomer. It depends on Mg(2+) as a cofactor. In terms of processing, autophosphorylated.

It is found in the cytoplasm. The enzyme catalyses beta-D-glucose 1-phosphate = beta-D-glucose 6-phosphate. With respect to regulation, activated by phosphorylation. Competitively inhibited by alpha-D-galactose-1-phosphate. Its function is as follows. Catalyzes the interconversion of D-glucose 1-phosphate (G1P) and D-glucose 6-phosphate (G6P), forming beta-D-glucose 1,6-(bis)phosphate (beta-G16P) as an intermediate. The beta-phosphoglucomutase (Beta-PGM) acts on the beta-C(1) anomer of G1P. Glucose or lactose are used in preference to maltose, which is only utilized after glucose or lactose has been exhausted. It plays a key role in the regulation of the flow of carbohydrate intermediates in glycolysis and the formation of the sugar nucleotide UDP-glucose. The sequence is that of Beta-phosphoglucomutase from Lactococcus lactis subsp. lactis (strain IL1403) (Streptococcus lactis).